We begin with the raw amino-acid sequence, 245 residues long: 1-(5-phosphoribosyl)-5-[(5-phosphoribosylamino)methylideneamino] imidazole-4-carboxamide isomerase (245 aa).

The active-site Proton acceptor is the D8. D130 serves as the catalytic Proton donor.

The protein belongs to the HisA/HisF family.

It localises to the cytoplasm. The catalysed reaction is 1-(5-phospho-beta-D-ribosyl)-5-[(5-phospho-beta-D-ribosylamino)methylideneamino]imidazole-4-carboxamide = 5-[(5-phospho-1-deoxy-D-ribulos-1-ylimino)methylamino]-1-(5-phospho-beta-D-ribosyl)imidazole-4-carboxamide. It participates in amino-acid biosynthesis; L-histidine biosynthesis; L-histidine from 5-phospho-alpha-D-ribose 1-diphosphate: step 4/9. This is 1-(5-phosphoribosyl)-5-[(5-phosphoribosylamino)methylideneamino] imidazole-4-carboxamide isomerase from Pseudomonas putida (strain W619).